A 212-amino-acid chain; its full sequence is Histone H1.2 (212 aa).

A compositionally biased stretch (low complexity) spans 1-17 (MSEAAPAAPAAAPPAEK). A disordered region spans residues 1 to 41 (MSEAAPAAPAAAPPAEKAPAKKKAAKKPAGVRRKASGPPVS). Position 2 is an N-acetylserine (serine 2). A Phosphoserine modification is found at serine 2. Residue lysine 17 is modified to N6-acetyllysine. A compositionally biased stretch (basic residues) spans 20-35 (AKKKAAKKPAGVRRKA). An N6-(2-hydroxyisobutyryl)lysine mark is found at lysine 23, lysine 26, and lysine 27. Lysine 34 is subject to N6-(beta-hydroxybutyryl)lysine; alternate. Lysine 34 carries the post-translational modification N6-crotonyllysine; alternate. The residue at position 34 (lysine 34) is an N6-methyllysine; alternate. Residues 36–109 (SGPPVSELIT…GASGSFKLNK (74 aa)) enclose the H15 domain. The residue at position 46 (lysine 46) is an N6-(2-hydroxyisobutyryl)lysine. Residue lysine 52 is modified to N6-(beta-hydroxybutyryl)lysine; alternate. Lysine 52 carries the N6-(2-hydroxyisobutyryl)lysine; alternate modification. At arginine 54 the chain carries Citrulline. Lysine 63 bears the N6-(2-hydroxyisobutyryl)lysine mark. Lysine 64 carries the post-translational modification N6-(beta-hydroxybutyryl)lysine; alternate. Residue lysine 64 is modified to N6-crotonyllysine; alternate. N6-(2-hydroxyisobutyryl)lysine; alternate is present on lysine 64. Lysine 75 and lysine 81 each carry N6-(2-hydroxyisobutyryl)lysine. N6-(beta-hydroxybutyryl)lysine; alternate is present on residues lysine 85 and lysine 90. N6-crotonyllysine; alternate is present on residues lysine 85, lysine 90, and lysine 97. Residues lysine 85, lysine 90, and lysine 97 each carry the N6-(2-hydroxyisobutyryl)lysine; alternate modification. The residue at position 97 (lysine 97) is an N6-succinyllysine; alternate. The disordered stretch occupies residues 98 to 212 (GTGASGSFKL…KAKKVAAKKK (115 aa)). At serine 104 the chain carries Phosphoserine; by PKC. Residue lysine 106 is modified to N6-(beta-hydroxybutyryl)lysine. N6-(2-hydroxyisobutyryl)lysine is present on residues lysine 110, lysine 117, lysine 121, lysine 129, and lysine 136. Positions 121-148 (KKAGAAKAKKPAGAAKKPKKATGAATPK) are enriched in low complexity. Phosphothreonine is present on threonine 146. Lysine 148 bears the N6-(2-hydroxyisobutyryl)lysine mark. Residues 149 to 160 (KAAKKTPKKAKK) show a composition bias toward basic residues. 2 positions are modified to N6-crotonyllysine; alternate: lysine 159 and lysine 168. Residues lysine 159 and lysine 168 each carry the N6-(2-hydroxyisobutyryl)lysine; alternate modification. Positions 169–212 (KVAKSPKKAKVTKPKKVKSASKAVKPKAAKPKVAKAKKVAAKKK) are enriched in basic residues. An N6-methyllysine; by EHMT1 and EHMT2 modification is found at lysine 186. The residue at position 187 (serine 187) is an ADP-ribosylserine. Residue lysine 212 is modified to N6-(2-hydroxyisobutyryl)lysine.

Belongs to the histone H1/H5 family. Interacts with TSC22D1 isoform 2. Post-translationally, H1 histones are progressively phosphorylated during the cell cycle, becoming maximally phosphorylated during late G2 phase and M phase, and being dephosphorylated sharply thereafter. In terms of processing, crotonylation (Kcr) is specifically present in male germ cells and marks testis-specific genes in post-meiotic cells, including X-linked genes that escape sex chromosome inactivation in haploid cells. Crotonylation marks active promoters and enhancers and confers resistance to transcriptional repressors. It is also associated with post-meiotically activated genes on autosomes. ADP-ribosylated on Ser-187 in response to DNA damage. Post-translationally, citrullination at Arg-54 (H1R54ci) by PADI4 takes place within the DNA-binding site of H1 and results in its displacement from chromatin and global chromatin decondensation, thereby promoting pluripotency and stem cell maintenance. In terms of processing, hydroxybutyrylation of histones is induced by starvation.

The protein resides in the nucleus. It is found in the chromosome. Functionally, histone H1 protein binds to linker DNA between nucleosomes forming the macromolecular structure known as the chromatin fiber. Histones H1 are necessary for the condensation of nucleosome chains into higher-order structured fibers. Also acts as a regulator of individual gene transcription through chromatin remodeling, nucleosome spacing and DNA methylation. The chain is Histone H1.2 from Mus musculus (Mouse).